Consider the following 252-residue polypeptide: Redox-sensing transcriptional repressor Rex (252 aa).

Positions 26–65 (LYLRALTALSERSVPTVSSEELAAAAGVNSAKLRKDFSYL) form a DNA-binding region, H-T-H motif. 100–105 (GIGNLG) serves as a coordination point for NAD(+). The disordered stretch occupies residues 222 to 252 (EAAAEGAIPAAASKESADKGPDGDVPAVMPA).

The protein belongs to the transcriptional regulatory Rex family. In terms of assembly, homodimer.

It is found in the cytoplasm. Its function is as follows. Modulates transcription in response to changes in cellular NADH/NAD(+) redox state. The chain is Redox-sensing transcriptional repressor Rex from Streptomyces avermitilis (strain ATCC 31267 / DSM 46492 / JCM 5070 / NBRC 14893 / NCIMB 12804 / NRRL 8165 / MA-4680).